Reading from the N-terminus, the 125-residue chain is MKALMLLTLSVLLCWVSADIRCHSCYKVPVLGCVDRQSCRLEPGQQCLTTHAYLGKMWVFSNLRCGTPEEPCQEAFNQTNRKLGLTYNTTCCNKDNCNSAGPRPTPALGLVFLTSLAGLGLWLLH.

Residues 1–18 form the signal peptide; sequence MKALMLLTLSVLLCWVSA. The region spanning 20-111 is the UPAR/Ly6 domain; it reads IRCHSCYKVP…PRPTPALGLV (92 aa). 3 disulfides stabilise this stretch: C22–C47, C25–C33, and C39–C65. N88 is a glycosylation site (N-linked (GlcNAc...) asparagine). A disulfide bond links C92 and C97. The GPI-anchor amidated serine moiety is linked to residue S99. A propeptide spans 100 to 125 (removed in mature form); sequence AGPRPTPALGLVFLTSLAGLGLWLLH.

As to quaternary structure, monomer. Post-translationally, N-glycosylated. As to expression, highly expressed at the leading edges of cells, on filopodia.

The protein resides in the cell membrane. The protein is Lymphocyte antigen 6 complex locus protein G6c (LY6G6C) of Homo sapiens (Human).